Consider the following 302-residue polypeptide: MGRFLTTTALALLATGGAATARPIRACDVSTKYLITFGDSYSQTGFDVTGTKPSASNPLGNPLLPGWTASGGLNWVGFLVSEFNTSTTLSYNFAYGGATTNATIVPPYQPTVLSFIDQVAQFSGSIARKPDYAPWNADNALFGVWIGVNDVGNVWWDPNYDSLLEQIMESYFGQLQILYDAGARNFVLLSVPPIQRTPAVLLNNSPENQKAEALAVDKYNEALAANLEAFTDKNGGITAKIVDTGVPFNTALDNPTDYGAPDATCYNSDGKSCLWFNDYHPGIEINRLVAQAVADAWKGSFF.

The signal sequence occupies residues Met-1–Ala-21. Asn-84 and Asn-101 each carry an N-linked (GlcNAc...) asparagine glycan.

This sequence belongs to the carbohydrate esterase CE16 family.

The protein localises to the secreted. It carries out the reaction an acetyl ester + H2O = an aliphatic alcohol + acetate + H(+). In terms of biological role, acetyl esterase that acts as an exo-deacetylase. Liberates acetic acid from xylo-oligomers. In Thermothelomyces thermophilus (Myceliophthora thermophila), this protein is Acetylesterase.